We begin with the raw amino-acid sequence, 719 residues long: Phosphoribosylformylglycinamidine synthase subunit PurL (719 aa).

His45 is an active-site residue. Tyr48 and Lys87 together coordinate ATP. Glu89 provides a ligand contact to Mg(2+). Substrate contacts are provided by residues 90-93 and Arg112; that span reads SHNH. The active-site Proton acceptor is His91. A Mg(2+)-binding site is contributed by Asp113. Position 236 (Gln236) interacts with substrate. Residue Asp264 participates in Mg(2+) binding. Residue 308-310 participates in substrate binding; it reads ESQ. Positions 493 and 530 each coordinate ATP. Residue Asn531 coordinates Mg(2+). Ser533 provides a ligand contact to substrate.

Belongs to the FGAMS family. In terms of assembly, monomer. Part of the FGAM synthase complex composed of 1 PurL, 1 PurQ and 2 PurS subunits.

It is found in the cytoplasm. It catalyses the reaction N(2)-formyl-N(1)-(5-phospho-beta-D-ribosyl)glycinamide + L-glutamine + ATP + H2O = 2-formamido-N(1)-(5-O-phospho-beta-D-ribosyl)acetamidine + L-glutamate + ADP + phosphate + H(+). It participates in purine metabolism; IMP biosynthesis via de novo pathway; 5-amino-1-(5-phospho-D-ribosyl)imidazole from N(2)-formyl-N(1)-(5-phospho-D-ribosyl)glycinamide: step 1/2. Its function is as follows. Part of the phosphoribosylformylglycinamidine synthase complex involved in the purines biosynthetic pathway. Catalyzes the ATP-dependent conversion of formylglycinamide ribonucleotide (FGAR) and glutamine to yield formylglycinamidine ribonucleotide (FGAM) and glutamate. The FGAM synthase complex is composed of three subunits. PurQ produces an ammonia molecule by converting glutamine to glutamate. PurL transfers the ammonia molecule to FGAR to form FGAM in an ATP-dependent manner. PurS interacts with PurQ and PurL and is thought to assist in the transfer of the ammonia molecule from PurQ to PurL. This chain is Phosphoribosylformylglycinamidine synthase subunit PurL, found in Novosphingobium aromaticivorans (strain ATCC 700278 / DSM 12444 / CCUG 56034 / CIP 105152 / NBRC 16084 / F199).